Consider the following 263-residue polypeptide: HTH-type transcriptional regulator KdgR (263 aa).

The region spanning 13-74 is the HTH iclR-type domain; sequence VSSVLKVFGI…GESEKYSLTL (62 aa). The segment at residues 34–53 is a DNA-binding region (H-T-H motif); that stretch reads ITELSQRVMMSKSTVYRFLQ. The 170-residue stretch at 89 to 258 folds into the IclR-ED domain; it reads LIRSADIQMR…ARKISAQMGY (170 aa).

Its subcellular location is the cytoplasm. In terms of biological role, transcriptional repressor that negatively regulates the expression of kdgT, kdgK and kdgA, which encode proteins involved in transport and catabolism of 2-keto-3-deoxygluconate (KDG). Also represses expression of eda, which encodes the Entner-Doudoroff aldolase, by binding to its P2 promoter region. The sequence is that of HTH-type transcriptional regulator KdgR from Escherichia coli (strain K12).